The primary structure comprises 206 residues: GTP cyclohydrolase 1 (206 aa).

3 residues coordinate Zn(2+): cysteine 95, histidine 98, and cysteine 166.

This sequence belongs to the GTP cyclohydrolase I family. Toroid-shaped homodecamer, composed of two pentamers of five dimers.

It catalyses the reaction GTP + H2O = 7,8-dihydroneopterin 3'-triphosphate + formate + H(+). Its pathway is cofactor biosynthesis; 7,8-dihydroneopterin triphosphate biosynthesis; 7,8-dihydroneopterin triphosphate from GTP: step 1/1. The polypeptide is GTP cyclohydrolase 1 (Bartonella quintana (strain Toulouse) (Rochalimaea quintana)).